The chain runs to 520 residues: Nucleolar protein 12 (520 aa).

Disordered stretches follow at residues 1–29 (MGKK…NVSV) and 41–185 (AGPV…DDDE). Residues 78 to 95 (ASEDQFMEDAPESPDAAE) show a composition bias toward acidic residues. The segment covering 120–132 (SYMRRLAKEEQKE) has biased composition (basic and acidic residues). Residues 144 to 168 (LEEESEDGEKESPQSEDGESEDEGA) show a composition bias toward acidic residues. 2 RRM domains span residues 191–303 (RTVF…NVAH) and 311–421 (RCVF…RAKK). The tract at residues 472-520 (EGNRATADGSSRIRVRTKSRGSKAKKDSRSKKRAAAYKAAGGKKAKIGK) is disordered. The segment covering 484 to 520 (IRVRTKSRGSKAKKDSRSKKRAAAYKAAGGKKAKIGK) has biased composition (basic residues).

The protein belongs to the RRM RBM34 family.

It localises to the nucleus. The protein resides in the nucleolus. In terms of biological role, involved in pre-25S rRNA processing. The sequence is that of Nucleolar protein 12 (nop12) from Emericella nidulans (strain FGSC A4 / ATCC 38163 / CBS 112.46 / NRRL 194 / M139) (Aspergillus nidulans).